The sequence spans 1062 residues: Cell division control protein 7 (1062 aa).

The 251-residue stretch at 9–259 (ITLGDCLGKG…TRKLLKHPWV (251 aa)) folds into the Protein kinase domain. ATP contacts are provided by residues 15–23 (LGKGAFGAV) and lysine 38. Catalysis depends on aspartate 131, which acts as the Proton acceptor. 2 stretches are compositionally biased toward polar residues: residues 296–310 (NRIN…QSSY) and 376–394 (AFNS…SPLS). 3 disordered regions span residues 296-331 (NRIN…NWDN), 361-394 (NNSS…SPLS), and 1038-1062 (NEHK…PLTQ).

The protein belongs to the protein kinase superfamily. Ser/Thr protein kinase family. CDC7 subfamily. As to quaternary structure, interacts with spg1. Seems to interact with cdc11. It depends on Mg(2+) as a cofactor.

It catalyses the reaction L-seryl-[protein] + ATP = O-phospho-L-seryl-[protein] + ADP + H(+). The catalysed reaction is L-threonyl-[protein] + ATP = O-phospho-L-threonyl-[protein] + ADP + H(+). Protein kinase essential for cell division. Plays a key role in initiation of septum formation and cytokinesis. The chain is Cell division control protein 7 (cdc7) from Schizosaccharomyces pombe (strain 972 / ATCC 24843) (Fission yeast).